The sequence spans 250 residues: Indole-3-glycerol phosphate synthase (250 aa).

This sequence belongs to the TrpC family.

It catalyses the reaction 1-(2-carboxyphenylamino)-1-deoxy-D-ribulose 5-phosphate + H(+) = (1S,2R)-1-C-(indol-3-yl)glycerol 3-phosphate + CO2 + H2O. It participates in amino-acid biosynthesis; L-tryptophan biosynthesis; L-tryptophan from chorismate: step 4/5. In Bacillus pumilus (strain SAFR-032), this protein is Indole-3-glycerol phosphate synthase.